The sequence spans 243 residues: Zinc import ATP-binding protein ZnuC 2 (243 aa).

Residues 3–218 (LSLHQLSVKF…PEYKVLFGLD (216 aa)) form the ABC transporter domain. Position 35 to 42 (35 to 42 (GPNGSGKS)) interacts with ATP.

It belongs to the ABC transporter superfamily. Zinc importer (TC 3.A.1.15.5) family. The complex is composed of two ATP-binding proteins (ZnuC), two transmembrane proteins (ZnuB) and a solute-binding protein (ZnuA).

It is found in the cell inner membrane. It carries out the reaction Zn(2+)(out) + ATP(in) + H2O(in) = Zn(2+)(in) + ADP(in) + phosphate(in) + H(+)(in). Part of the ABC transporter complex ZnuABC involved in zinc import. Responsible for energy coupling to the transport system. The sequence is that of Zinc import ATP-binding protein ZnuC 2 from Aliivibrio fischeri (strain ATCC 700601 / ES114) (Vibrio fischeri).